Reading from the N-terminus, the 790-residue chain is Sodium- and chloride-dependent glycine transporter 2 (790 aa).

The tract at residues 1-39 (MDYVNVVDGSKKTMNSPEGAAPGLIGATGITNPTPDNDL) is disordered. Topologically, residues 1-192 (MDYVNVVDGS…ARGNWSNKLD (192 aa)) are cytoplasmic. 3 helical membrane-spanning segments follow: residues 193–213 (FILSMVGYAVGLGNVWRFPYL), 220–240 (GAFLIPYLTMLALAGLPIFYL), and 264–284 (GCGIAMLIISVLIAIYYNIIM). Na(+) is bound by residues G199, A201, V202, and N206. At 285–387 (CYTIFYLFAS…GIEYPGEIRW (103 aa)) the chain is on the extracellular side. A disulfide bridge links C304 with C313. N-linked (GlcNAc...) asparagine glycans are attached at residues N336, N346, N351, and N357. The next 3 membrane-spanning stretches (helical) occupy residues 388–408 (PLVFCLFLAWIIVYASLAKGI), 427–447 (VILLFRGVTLPGAGDGIWWFI), and 463–483 (AATQIFFSLSAAWGGLITLSS). Na(+)-binding residues include S470 and N502. The next 6 helical transmembrane spans lie at 504–524 (ATSIFAGFVIFSVIGFMAHIL), 556–576 (WAIIFFLMLLTLGLDTMFATI), 597–617 (LFTLVCCVAFFIMGFPMITQG), 631–651 (SYSLVIIAIFELVGISYIYGL), 672–692 (ICWAFVTPTILTFILGFSFYQ), and 708–728 (MVMGWLMLACSVIWIPIMFVI). Residues L567 and D570 each coordinate Na(+). Over 729–790 (KMFLAPGTFI…PKDFELGTQC (62 aa)) the chain is Cytoplasmic.

It belongs to the sodium:neurotransmitter symporter (SNF) (TC 2.A.22) family. SLC6A5 subfamily. First expressed in late neurula stages in the anterior spinal cord, where expression intensifies through the tailbud stages, and by hatching, expression is seen in the hindbrain. During late hatching stages, expression extends along most of the length of the spinal cord, mildly intensifies in the hindbrain, and appears in localized regions of the lateral forebrain and medial midbrain. By the swimming tadpole stage, weak expression appears in the anterior hindbrain, with stronger expression in the posterior, postmitotic neurons.

It is found in the cell membrane. It catalyses the reaction glycine(out) + chloride(out) + 3 Na(+)(out) = glycine(in) + chloride(in) + 3 Na(+)(in). In terms of biological role, sodium- and chloride-dependent glycine transporter. Terminates the action of glycine by its high affinity sodium-dependent reuptake into presynaptic terminals. May be responsible for the termination of neurotransmission at strychnine-sensitive glycinergic synapses. The protein is Sodium- and chloride-dependent glycine transporter 2 of Xenopus laevis (African clawed frog).